The sequence spans 575 residues: Interleukin-1 receptor-like 2 (575 aa).

Positions 1-19 (MWSLLLCGLSIALPLSVTA) are cleaved as a signal peptide. 3 Ig-like C2-type domains span residues 20-111 (DGCK…VNLT), 126-211 (PNLS…VLNG), and 222-318 (YGGS…MCHA). The Extracellular portion of the chain corresponds to 20–335 (DGCKDIFMKN…ILQLPAPDFR (316 aa)). N-linked (GlcNAc...) asparagine glycosylation is found at Asn-41, Asn-59, Asn-109, Asn-127, Asn-184, Asn-234, Asn-250, Asn-266, and Asn-299. The cysteines at positions 42 and 95 are disulfide-linked. Cysteines 146 and 195 form a disulfide. A disulfide bridge links Cys-249 with Cys-316. A helical membrane pass occupies residues 336 to 356 (AYLIGGLIALVAVAVSVVYIY). At 357–575 (NIFKIDIVLW…RRKKCTLTTG (219 aa)) the chain is on the cytoplasmic side. The region spanning 381-536 (KLYDAYVLYP…KFWKTVRYHM (156 aa)) is the TIR domain. Residue Glu-467 is part of the active site.

This sequence belongs to the interleukin-1 receptor family. In terms of assembly, interacts with IL1RAP; the association is enhanced by IL36B indicative for an functional signaling complex and inhibited by IL36RN. Expressed in synovial fibroblasts and articular chondrocytes. Expressed in keratinocytes and monocyte-derived dendritic cells. Expressed in monocytes and myeloid dendritic cells; at protein level.

The protein resides in the membrane. It carries out the reaction NAD(+) + H2O = ADP-D-ribose + nicotinamide + H(+). In terms of biological role, receptor for interleukin-36 (IL36A, IL36B and IL36G). After binding to interleukin-36 associates with the coreceptor IL1RAP to form the interleukin-36 receptor complex which mediates interleukin-36-dependent activation of NF-kappa-B, MAPK and other pathways. The IL-36 signaling system is thought to be present in epithelial barriers and to take part in local inflammatory response; it is similar to the IL-1 system. Seems to be involved in skin inflammatory response by induction of the IL-23/IL-17/IL-22 pathway. The sequence is that of Interleukin-1 receptor-like 2 (IL1RL2) from Homo sapiens (Human).